Reading from the N-terminus, the 368-residue chain is Flagellar P-ring protein (368 aa).

The first 24 residues, 1–24 (MDKPMKRIFVVLVILLVLPQLALA), serve as a signal peptide directing secretion.

Belongs to the FlgI family. As to quaternary structure, the basal body constitutes a major portion of the flagellar organelle and consists of four rings (L,P,S, and M) mounted on a central rod.

It localises to the periplasm. It is found in the bacterial flagellum basal body. Assembles around the rod to form the L-ring and probably protects the motor/basal body from shearing forces during rotation. This chain is Flagellar P-ring protein, found in Geobacter sulfurreducens (strain ATCC 51573 / DSM 12127 / PCA).